The chain runs to 69 residues: Cytochrome c oxidase subunit 8A, mitochondrial (69 aa).

Residues 1-25 constitute a mitochondrion transit peptide; the sequence is MSVLTSLLLRGLTGSARWLPVPRAK. Positions 2–19 match the SIFI-degron motif; sequence SVLTSLLLRGLTGSARWL. The Mitochondrial matrix segment spans residues 26-36; that stretch reads VHSMPPEVELG. A helical transmembrane segment spans residues 37 to 60; sequence IMEKAIGLTSCFVSLFLPAGWILS. At 61–69 the chain is on the mitochondrial intermembrane side; that stretch reads HLEDYKRPE.

This sequence belongs to the cytochrome c oxidase VIII family. As to quaternary structure, component of the cytochrome c oxidase (complex IV, CIV), a multisubunit enzyme composed of 14 subunits. The complex is composed of a catalytic core of 3 subunits MT-CO1, MT-CO2 and MT-CO3, encoded in the mitochondrial DNA, and 11 supernumerary subunits COX4I, COX5A, COX5B, COX6A, COX6B, COX6C, COX7A, COX7B, COX7C, COX8 and NDUFA4, which are encoded in the nuclear genome. The complex exists as a monomer or a dimer and forms supercomplexes (SCs) in the inner mitochondrial membrane with NADH-ubiquinone oxidoreductase (complex I, CI) and ubiquinol-cytochrome c oxidoreductase (cytochrome b-c1 complex, complex III, CIII), resulting in different assemblies (supercomplex SCI(1)III(2)IV(1) and megacomplex MCI(2)III(2)IV(2)). In response to mitochondrial stress, the precursor protein is ubiquitinated by the SIFI complex in the cytoplasm before mitochondrial import, leading to its degradation. Within the SIFI complex, UBR4 initiates ubiquitin chain that are further elongated or branched by KCMF1.

Its subcellular location is the mitochondrion inner membrane. It participates in energy metabolism; oxidative phosphorylation. In terms of biological role, component of the cytochrome c oxidase, the last enzyme in the mitochondrial electron transport chain which drives oxidative phosphorylation. The respiratory chain contains 3 multisubunit complexes succinate dehydrogenase (complex II, CII), ubiquinol-cytochrome c oxidoreductase (cytochrome b-c1 complex, complex III, CIII) and cytochrome c oxidase (complex IV, CIV), that cooperate to transfer electrons derived from NADH and succinate to molecular oxygen, creating an electrochemical gradient over the inner membrane that drives transmembrane transport and the ATP synthase. Cytochrome c oxidase is the component of the respiratory chain that catalyzes the reduction of oxygen to water. Electrons originating from reduced cytochrome c in the intermembrane space (IMS) are transferred via the dinuclear copper A center (CU(A)) of subunit 2 and heme A of subunit 1 to the active site in subunit 1, a binuclear center (BNC) formed by heme A3 and copper B (CU(B)). The BNC reduces molecular oxygen to 2 water molecules using 4 electrons from cytochrome c in the IMS and 4 protons from the mitochondrial matrix. The protein is Cytochrome c oxidase subunit 8A, mitochondrial (COX8A) of Macaca silenus (Lion-tailed macaque).